Reading from the N-terminus, the 652-residue chain is Carboxypeptidase Z (652 aa).

An N-terminal signal peptide occupies residues 1–18 (MPPPLPLLLLTVLVVAAA). In terms of domain architecture, FZ spans 27–160 (NPAGECHRPP…TREDEGCYDP (134 aa)). Cystine bridges form between Cys-43-Cys-109, Cys-51-Cys-102, Cys-93-Cys-129, Cys-118-Cys-157, and Cys-122-Cys-146. A Peptidase M14 domain is found at 186-502 (SHHSYAQMVR…ESLLNFVETV (317 aa)). Zn(2+)-binding residues include His-248 and Glu-251. An N-linked (GlcNAc...) asparagine glycan is attached at Asn-281. His-380 serves as a coordination point for Zn(2+). Glu-472 acts as the Proton donor/acceptor in catalysis. Positions 595–629 (LRRTGPHDPLGGASSLGEATEPDPLRARRQPSADG) are disordered.

This sequence belongs to the peptidase M14 family. Zn(2+) is required as a cofactor. In terms of tissue distribution, in placenta, it is present within invasive trophoblasts and in the surrounding extracellular space. Also present in amnion cells, but is not readily apparent in the extracellular matrix of this cell type. Present in normal pituitary gland and neoplastic pituitary gland (especially POMC-, GH- and PRL-producing adenomas) (at protein level). Widely expressed.

Its subcellular location is the secreted. It localises to the extracellular space. It is found in the extracellular matrix. Inhibited by 2-mercaptomethyl-3-guanidinoethylthiopropanoic acid (MGTA) and guanidinoethylmercaptosuccinic acid (GEMSA). Inhibited by chelating agents such as EDTA and EGTA. Functionally, cleaves substrates with C-terminal arginine residues. Probably modulates the Wnt signaling pathway, by cleaving some undefined protein. May play a role in cleavage during prohormone processing. This Homo sapiens (Human) protein is Carboxypeptidase Z (CPZ).